We begin with the raw amino-acid sequence, 510 residues long: NAD(P)H-quinone oxidoreductase subunit 2, chloroplastic (510 aa).

The next 13 membrane-spanning stretches (helical) occupy residues 24–44, 59–79, 99–119, 124–144, 149–169, 183–203, 229–249, 295–315, 323–343, 354–374, 395–415, 418–438, and 484–504; these read LLLF…GLIL, WFYF…LFRW, IFQF…VEYI, MAIT…MFLC, LITI…LSGY, YLLM…WLYG, ISIA…PAPF, WHLL…LIAI, MLAY…IVGD, YMLF…SFGL, ALSL…AGFF, LYLF…MGLL, and MTVC…ILAI.

The protein belongs to the complex I subunit 2 family. In terms of assembly, NDH is composed of at least 16 different subunits, 5 of which are encoded in the nucleus.

The protein resides in the plastid. It localises to the chloroplast thylakoid membrane. It carries out the reaction a plastoquinone + NADH + (n+1) H(+)(in) = a plastoquinol + NAD(+) + n H(+)(out). The catalysed reaction is a plastoquinone + NADPH + (n+1) H(+)(in) = a plastoquinol + NADP(+) + n H(+)(out). In terms of biological role, NDH shuttles electrons from NAD(P)H:plastoquinone, via FMN and iron-sulfur (Fe-S) centers, to quinones in the photosynthetic chain and possibly in a chloroplast respiratory chain. The immediate electron acceptor for the enzyme in this species is believed to be plastoquinone. Couples the redox reaction to proton translocation, and thus conserves the redox energy in a proton gradient. The polypeptide is NAD(P)H-quinone oxidoreductase subunit 2, chloroplastic (Sisyrinchium montanum (Strict blue-eyed grass)).